The primary structure comprises 313 residues: Homoserine O-acetyltransferase (313 aa).

C142 functions as the Acyl-thioester intermediate in the catalytic mechanism. 2 residues coordinate substrate: K163 and S191. The Proton acceptor role is filled by H234. E236 is a catalytic residue. Residue R248 participates in substrate binding.

It belongs to the MetA family.

The protein resides in the cytoplasm. It carries out the reaction L-homoserine + acetyl-CoA = O-acetyl-L-homoserine + CoA. It participates in amino-acid biosynthesis; L-methionine biosynthesis via de novo pathway; O-acetyl-L-homoserine from L-homoserine: step 1/1. Transfers an acetyl group from acetyl-CoA to L-homoserine, forming acetyl-L-homoserine. The protein is Homoserine O-acetyltransferase of Streptococcus gordonii (strain Challis / ATCC 35105 / BCRC 15272 / CH1 / DL1 / V288).